Reading from the N-terminus, the 266-residue chain is Regulatory protein RecX (266 aa).

Belongs to the RecX family.

Its subcellular location is the cytoplasm. Its function is as follows. Modulates RecA activity. The protein is Regulatory protein RecX of Enterococcus faecalis (strain ATCC 700802 / V583).